The following is a 321-amino-acid chain: Phospho-N-acetylmuramoyl-pentapeptide-transferase (321 aa).

9 helical membrane-spanning segments follow: residues 1–21 (MSLLVWGATLISGFIIVFALM), 53–73 (TMGGLLFIIAILVTTLWVGGW), 77–97 (LQPTTWILMFILVLYGALGFW), 110–130 (GLKAWQKLLGQVIGAVILTLV), 145–165 (LGVWSLGIWYMLFAIIWLVGF), 174–194 (GLDGLVAGQATIAFGAYAVIA), 200–220 (YNVMLFCLAVVGSLLGFFVYN), 226–248 (IFMGDMGSLALGGALAAVSILLH), and 301–321 (IDIVFWSIGLVAAVISVATII).

Belongs to the glycosyltransferase 4 family. MraY subfamily. The cofactor is Mg(2+).

It is found in the cell membrane. The catalysed reaction is UDP-N-acetyl-alpha-D-muramoyl-L-alanyl-gamma-D-glutamyl-L-lysyl-D-alanyl-D-alanine + di-trans,octa-cis-undecaprenyl phosphate = Mur2Ac(oyl-L-Ala-gamma-D-Glu-L-Lys-D-Ala-D-Ala)-di-trans,octa-cis-undecaprenyl diphosphate + UMP. Its pathway is cell wall biogenesis; peptidoglycan biosynthesis. In terms of biological role, catalyzes the initial step of the lipid cycle reactions in the biosynthesis of the cell wall peptidoglycan: transfers peptidoglycan precursor phospho-MurNAc-pentapeptide from UDP-MurNAc-pentapeptide onto the lipid carrier undecaprenyl phosphate, yielding undecaprenyl-pyrophosphoryl-MurNAc-pentapeptide, known as lipid I. This Lactiplantibacillus plantarum (strain ATCC BAA-793 / NCIMB 8826 / WCFS1) (Lactobacillus plantarum) protein is Phospho-N-acetylmuramoyl-pentapeptide-transferase.